The primary structure comprises 159 residues: Probable carbonic anhydrase (159 aa).

Residues 33–35 (RGD) and 48–49 (QD) contribute to the substrate site. Zn(2+)-binding residues include histidine 54, histidine 71, and histidine 76.

Belongs to the gamma-class carbonic anhydrase family. Zn(2+) serves as cofactor.

It carries out the reaction hydrogencarbonate + H(+) = CO2 + H2O. In terms of biological role, probably reversibly hydrates carbon dioxide. This Methanocaldococcus jannaschii (strain ATCC 43067 / DSM 2661 / JAL-1 / JCM 10045 / NBRC 100440) (Methanococcus jannaschii) protein is Probable carbonic anhydrase.